A 722-amino-acid polypeptide reads, in one-letter code: MIYQGKSLSAQLLEDGIVEFKFDAQGSVNKFDQATFEEYIAVVAAINNCSEAKGVIVTSGKSTFIVGADITEFLVSFSQPEDALASWAKKASDVFDSFEDIQLPTIAAINGIALGGGCEMTLACDYRVAATTASIGLPEVKLGLMPGFGGTVRLPRLIGFDNAATWMSTGKAFKPAAALAQGAIDAVVEPENLQAAAISMLKLAIDGKLDWRAKRQPKLEALKLSPTELIMSSTTCKGMIAAKAGKHYPAPMVMINTLIASANLDRTGAMAAENTGFAKLAKTDAATAQIGLFMADQVIKGKAKKASKLATKAVNKAAVLGAGIMGGGIAYQSAYKGTPIIMKDINDQALDLGLTTATGILTKQVERGRMNAKKMAGVLNNITPSLSYDSVKDVDIVVEAVVENPKVKGMVLAEVEGVIGEDAILTSNTSTISIDLLAQSVKRPQNFCGMHFFNPVNKMPLVEVIRGKDTSDETVAAVVAYAAKMGKSPIVVNDCPGFYVNRVLFPYFAGFSQLVLEGADFTAIDKVMEKQFGWPMGPAYLLDVVGVDTADHCTGVMSSGFPTRMKKIDNDPVSTLYANERLGQKNGKGFYDHIKDKRGRPMKVPAPVAYELLGQHCADKKDFSSEEIIARMMIPMVNEVVRCLEEGVVDTAAEADMGLIYGVGFPPFRGGAIRYLETLGLDNFIAMADKYTDLGEIYHVTDGLREMAKSGKSYFTTDVKLA.

The tract at residues 1-189 (MIYQGKSLSA…AQGAIDAVVE (189 aa)) is enoyl-CoA hydratase/isomerase. Position 296 (Asp-296) interacts with substrate. The tract at residues 311–722 (TKAVNKAAVL…SYFTTDVKLA (412 aa)) is 3-hydroxyacyl-CoA dehydrogenase. NAD(+) contacts are provided by residues Met-325, Asp-344, 401–403 (VVE), Lys-408, and Ser-430. His-451 serves as the catalytic For 3-hydroxyacyl-CoA dehydrogenase activity. Residue Asn-454 participates in NAD(+) binding. Substrate is bound by residues Asn-501 and Tyr-661.

This sequence in the N-terminal section; belongs to the enoyl-CoA hydratase/isomerase family. The protein in the C-terminal section; belongs to the 3-hydroxyacyl-CoA dehydrogenase family. In terms of assembly, heterotetramer of two alpha chains (FadB) and two beta chains (FadA).

The enzyme catalyses a (3S)-3-hydroxyacyl-CoA + NAD(+) = a 3-oxoacyl-CoA + NADH + H(+). The catalysed reaction is a (3S)-3-hydroxyacyl-CoA = a (2E)-enoyl-CoA + H2O. It carries out the reaction a 4-saturated-(3S)-3-hydroxyacyl-CoA = a (3E)-enoyl-CoA + H2O. It catalyses the reaction (3S)-3-hydroxybutanoyl-CoA = (3R)-3-hydroxybutanoyl-CoA. The enzyme catalyses a (3Z)-enoyl-CoA = a 4-saturated (2E)-enoyl-CoA. The catalysed reaction is a (3E)-enoyl-CoA = a 4-saturated (2E)-enoyl-CoA. Its pathway is lipid metabolism; fatty acid beta-oxidation. Involved in the aerobic and anaerobic degradation of long-chain fatty acids via beta-oxidation cycle. Catalyzes the formation of 3-oxoacyl-CoA from enoyl-CoA via L-3-hydroxyacyl-CoA. It can also use D-3-hydroxyacyl-CoA and cis-3-enoyl-CoA as substrate. The sequence is that of Fatty acid oxidation complex subunit alpha from Colwellia psychrerythraea (strain 34H / ATCC BAA-681) (Vibrio psychroerythus).